The following is a 477-amino-acid chain: Probable cytosolic Fe-S cluster assembly factor GG21400 (477 aa).

Cys-23, Cys-68, Cys-71, Cys-74, Cys-187, Cys-243, Cys-395, and Cys-399 together coordinate [4Fe-4S] cluster.

It belongs to the NARF family.

Component of the cytosolic iron-sulfur (Fe/S) protein assembly machinery. Required for maturation of extramitochondrial Fe/S proteins. The chain is Probable cytosolic Fe-S cluster assembly factor GG21400 from Drosophila erecta (Fruit fly).